The following is a 359-amino-acid chain: Ribosomal RNA large subunit methyltransferase M (359 aa).

S-adenosyl-L-methionine-binding positions include Ser186, 219–222 (CPGG), Asp238, Asp258, and Asp275. Lys304 functions as the Proton acceptor in the catalytic mechanism.

Belongs to the class I-like SAM-binding methyltransferase superfamily. RNA methyltransferase RlmE family. RlmM subfamily. In terms of assembly, monomer.

It localises to the cytoplasm. The catalysed reaction is cytidine(2498) in 23S rRNA + S-adenosyl-L-methionine = 2'-O-methylcytidine(2498) in 23S rRNA + S-adenosyl-L-homocysteine + H(+). Its function is as follows. Catalyzes the 2'-O-methylation at nucleotide C2498 in 23S rRNA. The polypeptide is Ribosomal RNA large subunit methyltransferase M (Aliivibrio fischeri (strain MJ11) (Vibrio fischeri)).